Reading from the N-terminus, the 464-residue chain is Probable pectin lyase F (464 aa).

An N-terminal signal peptide occupies residues 1–20 (MAIIRSVIAATALLGAAVNA). Cysteines 80 and 103 form a disulfide. Residue Asn-126 is glycosylated (N-linked (GlcNAc...) asparagine). Residue Arg-252 is part of the active site. An intrachain disulfide couples Cys-319 to Cys-327. Residues 424-464 (EHEVSTPAVPTPTPVPSSVGSHGSTAGSSHPPAFSRTSFES) are disordered. Low complexity predominate over residues 439 to 448 (PSSVGSHGST).

The protein belongs to the polysaccharide lyase 1 family.

Its subcellular location is the secreted. It catalyses the reaction Eliminative cleavage of (1-&gt;4)-alpha-D-galacturonan methyl ester to give oligosaccharides with 4-deoxy-6-O-methyl-alpha-D-galact-4-enuronosyl groups at their non-reducing ends.. Functionally, pectinolytic enzymes consist of four classes of enzymes: pectin lyase, polygalacturonase, pectin methylesterase and rhamnogalacturonase. Among pectinolytic enzymes, pectin lyase is the most important in depolymerization of pectin, since it cleaves internal glycosidic bonds of highly methylated pectins. This Emericella nidulans (strain FGSC A4 / ATCC 38163 / CBS 112.46 / NRRL 194 / M139) (Aspergillus nidulans) protein is Probable pectin lyase F (pelF).